The primary structure comprises 132 residues: Small ribosomal subunit protein uS11 (132 aa).

Residues 1–16 (MAAGMKGKRSRRRKER) show a composition bias toward basic residues. A disordered region spans residues 1–20 (MAAGMKGKRSRRRKERKNVE).

This sequence belongs to the universal ribosomal protein uS11 family. In terms of assembly, part of the 30S ribosomal subunit. Interacts with proteins S7 and S18. Binds to IF-3.

In terms of biological role, located on the platform of the 30S subunit, it bridges several disparate RNA helices of the 16S rRNA. Forms part of the Shine-Dalgarno cleft in the 70S ribosome. This Clostridium botulinum (strain Hall / ATCC 3502 / NCTC 13319 / Type A) protein is Small ribosomal subunit protein uS11.